We begin with the raw amino-acid sequence, 646 residues long: Ribonuclease Y (646 aa).

Residues 4-24 (VLVVLLSLVLVVLSVLILAVA) traverse the membrane as a helical segment. Disordered stretches follow at residues 43–62 (PRTP…DFDE) and 69–118 (LPAP…HGGS). The KH domain maps to 336–402 (VVTVLHLPGD…RITLAALVSD (67 aa)). An HD domain is found at 462–555 (VLAHLIESAH…TQAADQISGG (94 aa)).

This sequence belongs to the RNase Y family.

It is found in the cell membrane. In terms of biological role, endoribonuclease that initiates mRNA decay. This is Ribonuclease Y from Frankia casuarinae (strain DSM 45818 / CECT 9043 / HFP020203 / CcI3).